Here is a 339-residue protein sequence, read N- to C-terminus: Undecaprenyl-phosphate 4-deoxy-4-formamido-L-arabinose transferase (339 aa).

2 helical membrane-spanning segments follow: residues Leu-235–Val-255 and Phe-270–Leu-290.

It belongs to the glycosyltransferase 2 family.

It localises to the cell inner membrane. The catalysed reaction is UDP-4-deoxy-4-formamido-beta-L-arabinose + di-trans,octa-cis-undecaprenyl phosphate = 4-deoxy-4-formamido-alpha-L-arabinopyranosyl di-trans,octa-cis-undecaprenyl phosphate + UDP. It functions in the pathway glycolipid biosynthesis; 4-amino-4-deoxy-alpha-L-arabinose undecaprenyl phosphate biosynthesis; 4-amino-4-deoxy-alpha-L-arabinose undecaprenyl phosphate from UDP-4-deoxy-4-formamido-beta-L-arabinose and undecaprenyl phosphate: step 1/2. The protein operates within bacterial outer membrane biogenesis; lipopolysaccharide biosynthesis. In terms of biological role, catalyzes the transfer of 4-deoxy-4-formamido-L-arabinose from UDP to undecaprenyl phosphate. The modified arabinose is attached to lipid A and is required for resistance to polymyxin and cationic antimicrobial peptides. The protein is Undecaprenyl-phosphate 4-deoxy-4-formamido-L-arabinose transferase of Pseudomonas fluorescens (strain ATCC BAA-477 / NRRL B-23932 / Pf-5).